We begin with the raw amino-acid sequence, 152 residues long: CASP-like protein 5C3 (152 aa).

Residues 1–17 (MVEVPGSVGTTASLSLR) lie on the Cytoplasmic side of the membrane. Residues 18–38 (LGQMVLAFGSLLFMTIGVRFY) traverse the membrane as a helical segment. The Extracellular portion of the chain corresponds to 39 to 42 (QFTA). The chain crosses the membrane as a helical span at residues 43 to 63 (FCYLVTIMSLAIPWNLTLAMV). Topologically, residues 64–78 (DIYCVILQQPFQKPR) are cytoplasmic. A helical membrane pass occupies residues 79–99 (ILLAISIGDWVVSVLALASAS). The Extracellular segment spans residues 100-128 (SAASVVDILRSNESSCPPTICNRYQFAAT). Asn111 carries an N-linked (GlcNAc...) asparagine glycan. Residues 129–149 (LAFLTWFLSLSSSLFNLWLLP) form a helical membrane-spanning segment. The Cytoplasmic portion of the chain corresponds to 150-152 (SLI).

Belongs to the Casparian strip membrane proteins (CASP) family. As to quaternary structure, homodimer and heterodimers. As to expression, expressed in the floral organ abscission zone and flower buds.

The protein resides in the cell membrane. This Arabidopsis thaliana (Mouse-ear cress) protein is CASP-like protein 5C3.